We begin with the raw amino-acid sequence, 449 residues long: Nucleoprotein (449 aa).

The segment at 1–55 is disordered; it reads MSFTPGKQSSSRASSGNRSGNGILKWADQSDQSRNVQTRGRRVQSKQTATSQQPS. The span at 9-22 shows a compositional bias: low complexity; sequence SSSRASSGNRSGNG. 2 stretches are compositionally biased toward polar residues: residues 29-38 and 45-55; these read QSDQSRNVQT and SKQTATSQQPS. The RNA-binding stretch occupies residues 52–194; sequence QQPSGGTVVP…GYYIEGSGRS (143 aa). A CoV N NTD domain is found at 61–190; that stretch reads PYYSWFSGIT…VLPQGYYIEG (130 aa). Arg-106, Arg-122, and Arg-164 together coordinate RNA. 3 disordered regions span residues 158 to 231, 266 to 297, and 387 to 449; these read PADI…VTPD, ILNKPRQKRSPNKQCTVQQCFGKRGPNQNFGG, and MMNI…TSEI. Phosphoserine; by host is present on Ser-167. Residue Thr-174 is modified to Phosphothreonine; by host. Ser-191 bears the Phosphoserine; by host mark. 2 stretches are compositionally biased toward polar residues: residues 194-204 and 212-227; these read SAPNSRSTSRA and GSRSRANSGNRTSTPG. Residues 259 to 384 form the CoV N CTD domain; it reads AKEVRQKILN…QNLNAYQHQE (126 aa). The span at 266 to 276 shows a compositional bias: basic residues; that stretch reads ILNKPRQKRSP. The dimerization stretch occupies residues 266-385; it reads ILNKPRQKRS…NLNAYQHQED (120 aa). Ser-391 is modified (phosphoserine; by host). Residues 400–410 are compositionally biased toward polar residues; the sequence is QKNGQVENDNV. The span at 423–440 shows a compositional bias: basic and acidic residues; it reads KSRELTAEDISLLKKMDE. Ser-424 is modified (phosphoserine; by host). Thr-428 is modified (phosphothreonine; by host).

It belongs to the betacoronavirus nucleocapsid protein family. As to quaternary structure, homooligomer. Both monomeric and oligomeric forms interact with RNA. Interacts with protein M. Interacts with NSP3; this interaction serves to tether the genome to the newly translated replicase-transcriptase complex at a very early stage of infection. Post-translationally, ADP-ribosylated. The ADP-ribosylation is retained in the virion during infection. In terms of processing, phosphorylated on serine and threonine residues.

The protein localises to the virion. The protein resides in the host endoplasmic reticulum-Golgi intermediate compartment. It localises to the host Golgi apparatus. In terms of biological role, packages the positive strand viral genome RNA into a helical ribonucleocapsid (RNP) and plays a fundamental role during virion assembly through its interactions with the viral genome and membrane protein M. Plays an important role in enhancing the efficiency of subgenomic viral RNA transcription as well as viral replication. This chain is Nucleoprotein, found in Sus scrofa (Pig).